Consider the following 282-residue polypeptide: Nucleotide-binding protein XCV3122 (282 aa).

ATP is bound at residue 5–12 (GLSGSGKS). Residue 57–60 (DVRS) participates in GTP binding.

The protein belongs to the RapZ-like family.

In terms of biological role, displays ATPase and GTPase activities. The protein is Nucleotide-binding protein XCV3122 of Xanthomonas euvesicatoria pv. vesicatoria (strain 85-10) (Xanthomonas campestris pv. vesicatoria).